The following is a 926-amino-acid chain: Isoleucine--tRNA ligase (926 aa).

Residues 57–67 carry the 'HIGH' region motif; sequence PYANGNIHMGH. Glu-555 is a binding site for L-isoleucyl-5'-AMP. The short motif at 596–600 is the 'KMSKS' region element; that stretch reads KMSKS. Residue Lys-599 coordinates ATP. The Zn(2+) site is built by Cys-897, Cys-900, Cys-914, and Cys-917.

The protein belongs to the class-I aminoacyl-tRNA synthetase family. IleS type 1 subfamily. Monomer. Zn(2+) serves as cofactor.

Its subcellular location is the cytoplasm. It catalyses the reaction tRNA(Ile) + L-isoleucine + ATP = L-isoleucyl-tRNA(Ile) + AMP + diphosphate. Functionally, catalyzes the attachment of isoleucine to tRNA(Ile). As IleRS can inadvertently accommodate and process structurally similar amino acids such as valine, to avoid such errors it has two additional distinct tRNA(Ile)-dependent editing activities. One activity is designated as 'pretransfer' editing and involves the hydrolysis of activated Val-AMP. The other activity is designated 'posttransfer' editing and involves deacylation of mischarged Val-tRNA(Ile). In Natranaerobius thermophilus (strain ATCC BAA-1301 / DSM 18059 / JW/NM-WN-LF), this protein is Isoleucine--tRNA ligase.